The sequence spans 216 residues: Cytidylate kinase (216 aa).

Residue 10 to 18 (GPAGAGKST) coordinates ATP.

Belongs to the cytidylate kinase family. Type 1 subfamily.

It is found in the cytoplasm. The catalysed reaction is CMP + ATP = CDP + ADP. The enzyme catalyses dCMP + ATP = dCDP + ADP. This is Cytidylate kinase from Clostridioides difficile (strain 630) (Peptoclostridium difficile).